Consider the following 1212-residue polypeptide: Probable serine/threonine-protein kinase DDB_G0284491 (1212 aa).

Residues 197 to 217 form a helical membrane-spanning segment; that stretch reads LFHSFSLLNLYVYLIIVIRII. 14 N-linked (GlcNAc...) asparagine glycosylation sites follow: Asn-229, Asn-299, Asn-309, Asn-328, Asn-335, Asn-341, Asn-344, Asn-391, Asn-419, Asn-422, Asn-426, Asn-427, Asn-435, and Asn-499. The disordered stretch occupies residues 288–329; that stretch reads LNNNNDNNLNNNNSNNNLNNNNNSNSNFNNDNNLNSNINSND. Disordered regions lie at residues 412–439 and 489–517; these read GNSN…NSGG and IIKN…DYEE. Over residues 489–507 the composition is skewed to low complexity; the sequence is IIKNNNNNNNNNSNNNNNN. Residues 508–517 show a composition bias toward acidic residues; that stretch reads NDEDDSDYEE. A helical transmembrane segment spans residues 673 to 693; that stretch reads IQIFDDYSLIIALRLLMNFIL. Residues 703–720 show a composition bias toward pro residues; sequence VPPPPTQPSSRPQSPPTV. Disordered stretches follow at residues 703 to 733 and 751 to 813; these read VPPP…HHSG and EVVS…NNNN. The Protein kinase domain maps to 865–1182; that stretch reads ETEIEPFASG…EVYNDLQDIY (318 aa). ATP contacts are provided by residues 871 to 879 and Lys-924; that span reads FASGGQANI. Asp-1035 (proton acceptor) is an active-site residue.

The protein belongs to the protein kinase superfamily. Ser/Thr protein kinase family.

It localises to the membrane. It carries out the reaction L-seryl-[protein] + ATP = O-phospho-L-seryl-[protein] + ADP + H(+). The catalysed reaction is L-threonyl-[protein] + ATP = O-phospho-L-threonyl-[protein] + ADP + H(+). This is Probable serine/threonine-protein kinase DDB_G0284491 from Dictyostelium discoideum (Social amoeba).